We begin with the raw amino-acid sequence, 367 residues long: Alanine racemase (367 aa).

The active-site Proton acceptor; specific for D-alanine is K35. Position 35 is an N6-(pyridoxal phosphate)lysine (K35). R130 lines the substrate pocket. The Proton acceptor; specific for L-alanine role is filled by Y259. M307 contributes to the substrate binding site.

It belongs to the alanine racemase family. Pyridoxal 5'-phosphate is required as a cofactor.

It catalyses the reaction L-alanine = D-alanine. The protein operates within amino-acid biosynthesis; D-alanine biosynthesis; D-alanine from L-alanine: step 1/1. Catalyzes the interconversion of L-alanine and D-alanine. May also act on other amino acids. The chain is Alanine racemase (alr) from Delftia acidovorans (strain DSM 14801 / SPH-1).